The chain runs to 259 residues: Global transcriptional regulator CodY (259 aa).

Residues 1–155 (MELLAKTRKL…SSTVVGMEIL (155 aa)) are GAF domain. Positions 203 to 222 (ASKIADRVGITRSVIVNALR) form a DNA-binding region, H-T-H motif. Serine 215 is modified (phosphoserine).

Belongs to the CodY family.

It is found in the cytoplasm. Functionally, DNA-binding global transcriptional regulator which is involved in the adaptive response to starvation and acts by directly or indirectly controlling the expression of numerous genes in response to nutrient availability. During rapid exponential growth, CodY is highly active and represses genes whose products allow adaptation to nutrient depletion. This chain is Global transcriptional regulator CodY, found in Bacillus anthracis (strain A0248).